The chain runs to 271 residues: NADPH-dependent 7-cyano-7-deazaguanine reductase (271 aa).

Residue 81–83 (IES) coordinates substrate. Position 83–84 (83–84 (SK)) interacts with NADPH. The active-site Thioimide intermediate is the Cys-177. Residue Asp-184 is the Proton donor of the active site. 216-217 (HE) is a substrate binding site. 245–246 (RG) is an NADPH binding site.

Belongs to the GTP cyclohydrolase I family. QueF type 2 subfamily. In terms of assembly, homodimer.

It localises to the cytoplasm. It carries out the reaction 7-aminomethyl-7-carbaguanine + 2 NADP(+) = 7-cyano-7-deazaguanine + 2 NADPH + 3 H(+). It participates in tRNA modification; tRNA-queuosine biosynthesis. Functionally, catalyzes the NADPH-dependent reduction of 7-cyano-7-deazaguanine (preQ0) to 7-aminomethyl-7-deazaguanine (preQ1). This Xanthomonas campestris pv. campestris (strain 8004) protein is NADPH-dependent 7-cyano-7-deazaguanine reductase.